Here is a 284-residue protein sequence, read N- to C-terminus: Bifunctional protein FolD (284 aa).

166 to 168 lines the NADP(+) pocket; the sequence is GAS.

Belongs to the tetrahydrofolate dehydrogenase/cyclohydrolase family. In terms of assembly, homodimer.

It catalyses the reaction (6R)-5,10-methylene-5,6,7,8-tetrahydrofolate + NADP(+) = (6R)-5,10-methenyltetrahydrofolate + NADPH. The enzyme catalyses (6R)-5,10-methenyltetrahydrofolate + H2O = (6R)-10-formyltetrahydrofolate + H(+). It functions in the pathway one-carbon metabolism; tetrahydrofolate interconversion. Catalyzes the oxidation of 5,10-methylenetetrahydrofolate to 5,10-methenyltetrahydrofolate and then the hydrolysis of 5,10-methenyltetrahydrofolate to 10-formyltetrahydrofolate. The protein is Bifunctional protein FolD of Legionella pneumophila (strain Paris).